Consider the following 392-residue polypeptide: Queuine tRNA-ribosyltransferase (392 aa).

Residue Asp92 is the Proton acceptor of the active site. Substrate is bound by residues 92 to 96 (DSGGF), Asp146, Gln188, and Gly215. The tract at residues 246 to 252 (GVGSPED) is RNA binding. Asp265 functions as the Nucleophile in the catalytic mechanism. The segment at 270 to 274 (TRLGR) is RNA binding; important for wobble base 34 recognition. Residues Cys303, Cys305, Cys308, and His334 each contribute to the Zn(2+) site.

The protein belongs to the queuine tRNA-ribosyltransferase family. In terms of assembly, homodimer. Within each dimer, one monomer is responsible for RNA recognition and catalysis, while the other monomer binds to the replacement base PreQ1. It depends on Zn(2+) as a cofactor.

It carries out the reaction 7-aminomethyl-7-carbaguanine + guanosine(34) in tRNA = 7-aminomethyl-7-carbaguanosine(34) in tRNA + guanine. Its pathway is tRNA modification; tRNA-queuosine biosynthesis. Functionally, catalyzes the base-exchange of a guanine (G) residue with the queuine precursor 7-aminomethyl-7-deazaguanine (PreQ1) at position 34 (anticodon wobble position) in tRNAs with GU(N) anticodons (tRNA-Asp, -Asn, -His and -Tyr). Catalysis occurs through a double-displacement mechanism. The nucleophile active site attacks the C1' of nucleotide 34 to detach the guanine base from the RNA, forming a covalent enzyme-RNA intermediate. The proton acceptor active site deprotonates the incoming PreQ1, allowing a nucleophilic attack on the C1' of the ribose to form the product. After dissociation, two additional enzymatic reactions on the tRNA convert PreQ1 to queuine (Q), resulting in the hypermodified nucleoside queuosine (7-(((4,5-cis-dihydroxy-2-cyclopenten-1-yl)amino)methyl)-7-deazaguanosine). In Herpetosiphon aurantiacus (strain ATCC 23779 / DSM 785 / 114-95), this protein is Queuine tRNA-ribosyltransferase.